A 320-amino-acid chain; its full sequence is Cytochrome f (320 aa).

An N-terminal signal peptide occupies residues 1–35 (MENRNTFSWVKEQITRSISVSIMIYVITRTSISNA). Positions 36, 56, 59, and 60 each coordinate heme. A helical transmembrane segment spans residues 286–306 (VQGLLFFFASVILAQVFLVLK).

This sequence belongs to the cytochrome f family. As to quaternary structure, the 4 large subunits of the cytochrome b6-f complex are cytochrome b6, subunit IV (17 kDa polypeptide, petD), cytochrome f and the Rieske protein, while the 4 small subunits are PetG, PetL, PetM and PetN. The complex functions as a dimer. The cofactor is heme.

It is found in the plastid. The protein resides in the chloroplast thylakoid membrane. Functionally, component of the cytochrome b6-f complex, which mediates electron transfer between photosystem II (PSII) and photosystem I (PSI), cyclic electron flow around PSI, and state transitions. This is Cytochrome f from Hordeum vulgare (Barley).